A 239-amino-acid chain; its full sequence is 1-(5-phosphoribosyl)-5-[(5-phosphoribosylamino)methylideneamino] imidazole-4-carboxamide isomerase (239 aa).

D8 serves as the catalytic Proton acceptor. D129 serves as the catalytic Proton donor.

The protein belongs to the HisA/HisF family.

The protein localises to the cytoplasm. The catalysed reaction is 1-(5-phospho-beta-D-ribosyl)-5-[(5-phospho-beta-D-ribosylamino)methylideneamino]imidazole-4-carboxamide = 5-[(5-phospho-1-deoxy-D-ribulos-1-ylimino)methylamino]-1-(5-phospho-beta-D-ribosyl)imidazole-4-carboxamide. Its pathway is amino-acid biosynthesis; L-histidine biosynthesis; L-histidine from 5-phospho-alpha-D-ribose 1-diphosphate: step 4/9. This chain is 1-(5-phosphoribosyl)-5-[(5-phosphoribosylamino)methylideneamino] imidazole-4-carboxamide isomerase, found in Bacillus mycoides (strain KBAB4) (Bacillus weihenstephanensis).